The chain runs to 194 residues: dCTP deaminase (194 aa).

DCTP is bound by residues 110–115 (RSSLAR), Asp-128, 136–138 (VLE), Tyr-171, Lys-178, and Gln-182. Residue Glu-138 is the Proton donor/acceptor of the active site. The interval 172–194 (NKRKSAKYRDQQEAVASRISQDK) is disordered.

This sequence belongs to the dCTP deaminase family. As to quaternary structure, homotrimer.

The catalysed reaction is dCTP + H2O + H(+) = dUTP + NH4(+). It functions in the pathway pyrimidine metabolism; dUMP biosynthesis; dUMP from dCTP (dUTP route): step 1/2. Functionally, catalyzes the deamination of dCTP to dUTP. This Shewanella loihica (strain ATCC BAA-1088 / PV-4) protein is dCTP deaminase.